Consider the following 147-residue polypeptide: Large ribosomal subunit protein uL13 (147 aa).

This sequence belongs to the universal ribosomal protein uL13 family. As to quaternary structure, part of the 50S ribosomal subunit.

Its function is as follows. This protein is one of the early assembly proteins of the 50S ribosomal subunit, although it is not seen to bind rRNA by itself. It is important during the early stages of 50S assembly. This is Large ribosomal subunit protein uL13 from Rhodococcus opacus (strain B4).